The primary structure comprises 158 residues: 6,7-dimethyl-8-ribityllumazine synthase (158 aa).

5-amino-6-(D-ribitylamino)uracil is bound by residues F24, 58 to 60 (AFE), and 82 to 84 (AVI). (2S)-2-hydroxy-3-oxobutyl phosphate is bound at residue 87-88 (GT). H90 (proton donor) is an active-site residue. 5-amino-6-(D-ribitylamino)uracil is bound at residue F115. R129 lines the (2S)-2-hydroxy-3-oxobutyl phosphate pocket.

This sequence belongs to the DMRL synthase family. Forms an icosahedral capsid composed of 60 subunits, arranged as a dodecamer of pentamers.

The enzyme catalyses (2S)-2-hydroxy-3-oxobutyl phosphate + 5-amino-6-(D-ribitylamino)uracil = 6,7-dimethyl-8-(1-D-ribityl)lumazine + phosphate + 2 H2O + H(+). It functions in the pathway cofactor biosynthesis; riboflavin biosynthesis; riboflavin from 2-hydroxy-3-oxobutyl phosphate and 5-amino-6-(D-ribitylamino)uracil: step 1/2. In terms of biological role, catalyzes the formation of 6,7-dimethyl-8-ribityllumazine by condensation of 5-amino-6-(D-ribitylamino)uracil with 3,4-dihydroxy-2-butanone 4-phosphate. This is the penultimate step in the biosynthesis of riboflavin. The protein is 6,7-dimethyl-8-ribityllumazine synthase of Stutzerimonas stutzeri (strain A1501) (Pseudomonas stutzeri).